The following is a 133-amino-acid chain: Small ribosomal subunit protein uS8 (133 aa).

Belongs to the universal ribosomal protein uS8 family. In terms of assembly, part of the 30S ribosomal subunit. Contacts proteins S5 and S12.

In terms of biological role, one of the primary rRNA binding proteins, it binds directly to 16S rRNA central domain where it helps coordinate assembly of the platform of the 30S subunit. The protein is Small ribosomal subunit protein uS8 of Prochlorococcus marinus (strain MIT 9215).